The chain runs to 374 residues: Putative cullin-like protein 2 (374 aa).

It belongs to the cullin family.

In Arabidopsis thaliana (Mouse-ear cress), this protein is Putative cullin-like protein 2.